The following is a 356-amino-acid chain: Myricetin 7/4'-O-methyltransferase 2 (356 aa).

Residue D222 coordinates S-adenosyl-L-methionine. H260 functions as the Proton acceptor in the catalytic mechanism.

The protein belongs to the class I-like SAM-binding methyltransferase superfamily. Cation-independent O-methyltransferase family. As to quaternary structure, homodimer.

The enzyme catalyses quercetin + S-adenosyl-L-methionine = rhamnetin + S-adenosyl-L-homocysteine + H(+). It catalyses the reaction kaempferol + S-adenosyl-L-methionine = kaempferide + S-adenosyl-L-homocysteine + H(+). It carries out the reaction myricetin + S-adenosyl-L-methionine = 7-O-methylmyricetin + S-adenosyl-L-homocysteine + H(+). The catalysed reaction is kaempferide + S-adenosyl-L-methionine = 7,4'-O-dimethylkaempferol + S-adenosyl-L-homocysteine + H(+). The enzyme catalyses isorhamnetin + S-adenosyl-L-methionine = 3',4'-O-dimethylquercetin + S-adenosyl-L-homocysteine + 2 H(+). It catalyses the reaction 3',4',5,7-tetrahydroxy-3-methoxyflavone + S-adenosyl-L-methionine = 3',4',5-trihydroxy-3,7-dimethoxyflavone + S-adenosyl-L-homocysteine + H(+). It carries out the reaction rhamnetin + S-adenosyl-L-methionine = 7,4'-O-dimethylquercetin + S-adenosyl-L-homocysteine + H(+). The catalysed reaction is syringetin + S-adenosyl-L-methionine = 7,3',5'-O-trimethylmyricetin + S-adenosyl-L-homocysteine + H(+). The enzyme catalyses 3',4',5'-O-trimethylmyricetin + S-adenosyl-L-methionine = 7,3',4',5'-O-tetramethylmyricetin + S-adenosyl-L-homocysteine. Its pathway is flavonoid metabolism. In terms of biological role, flavonoid 7/4'-O-methyltransferase involved in the biosynthesis of polymethoxylated flavonoids natural products such as myricetin derivatives, aroma compounds possessing antioxidant properties and exhibiting pharmacological activities such as anti-carcinogen, anti-viral, anti-thrombotic, anti-diabetic, anti-atherosclerotic, and anti-inflammatory effects. Catalyzes S-adenosylmethionine-dependent regioselective 7/4'-O-methylation of flavonoids; active on various hydroxylated flavonoid substrates. In Solanum lycopersicum (Tomato), this protein is Myricetin 7/4'-O-methyltransferase 2.